Reading from the N-terminus, the 301-residue chain is GTPase Era (301 aa).

Residues 7–175 (YCGFIAIVGR…AGIVRKHLPE (169 aa)) form the Era-type G domain. Positions 15–22 (GRPNVGKS) are G1. Residue 15-22 (GRPNVGKS) coordinates GTP. Residues 41–45 (QTTRH) are G2. The segment at 62 to 65 (DTPG) is G3. GTP-binding positions include 62 to 66 (DTPGL) and 124 to 127 (NKVD). Positions 124-127 (NKVD) are G4. The G5 stretch occupies residues 154–156 (ISA). Residues 206 to 283 (LGAELPYSVT…HLELWVKVKS (78 aa)) enclose the KH type-2 domain.

Belongs to the TRAFAC class TrmE-Era-EngA-EngB-Septin-like GTPase superfamily. Era GTPase family. In terms of assembly, monomer.

The protein resides in the cytoplasm. The protein localises to the cell inner membrane. An essential GTPase that binds both GDP and GTP, with rapid nucleotide exchange. Plays a role in 16S rRNA processing and 30S ribosomal subunit biogenesis and possibly also in cell cycle regulation and energy metabolism. This Salmonella agona (strain SL483) protein is GTPase Era.